Here is a 164-residue protein sequence, read N- to C-terminus: Phosphopantetheine adenylyltransferase (164 aa).

Ser9 contributes to the substrate binding site. Residues 9–10 and His17 contribute to the ATP site; that span reads SF. Lys41, Val78, and Arg92 together coordinate substrate. ATP is bound by residues 93-95, Glu103, and 128-134; these read GLR and VRTITAT.

Belongs to the bacterial CoaD family. Homohexamer. Mg(2+) serves as cofactor.

The protein localises to the cytoplasm. It carries out the reaction (R)-4'-phosphopantetheine + ATP + H(+) = 3'-dephospho-CoA + diphosphate. It functions in the pathway cofactor biosynthesis; coenzyme A biosynthesis; CoA from (R)-pantothenate: step 4/5. Reversibly transfers an adenylyl group from ATP to 4'-phosphopantetheine, yielding dephospho-CoA (dPCoA) and pyrophosphate. The sequence is that of Phosphopantetheine adenylyltransferase from Brucella anthropi (strain ATCC 49188 / DSM 6882 / CCUG 24695 / JCM 21032 / LMG 3331 / NBRC 15819 / NCTC 12168 / Alc 37) (Ochrobactrum anthropi).